The sequence spans 557 residues: Urocanate hydratase (557 aa).

The segment at 1 to 20 is disordered; that stretch reads MSNPRHNEREVRSPRGDELN. NAD(+)-binding positions include 52–53, Gln130, 176–178, Glu196, Arg201, 242–243, 263–267, 273–274, and Tyr322; these read GG, GMG, NA, QTSAH, and YL. The active site involves Cys410. Gly492 contacts NAD(+).

It belongs to the urocanase family. It depends on NAD(+) as a cofactor.

It localises to the cytoplasm. The enzyme catalyses 4-imidazolone-5-propanoate = trans-urocanate + H2O. Its pathway is amino-acid degradation; L-histidine degradation into L-glutamate; N-formimidoyl-L-glutamate from L-histidine: step 2/3. Catalyzes the conversion of urocanate to 4-imidazolone-5-propionate. This chain is Urocanate hydratase, found in Brucella melitensis biotype 2 (strain ATCC 23457).